Reading from the N-terminus, the 461-residue chain is MRVLIKNGTVVNADGQAKQDLLIESGIVRQLGNNISPQLPYEEIDATGCYVFPGGVDVHTHFNIDVGIARSCDDFFTGTRAAACGGTTTIIDHMGFGPNGCRLRHQLEVYRGYAAHKAVIDYSFHGVIQHINHAILDEIPMMVEEGLSSFKLYLTYQYKLNDDEVLQALRRLHESGALTTVHPENDAAIASKRAEFIAAGLTAPRYHALSRPLECEAEAIARMINLAQIAGNAPLYIVHLSNGLGLDYLRLARANHQPVWVETCPQYLLLDERSYDTEDGMKFILSPPLRNVREQDKLWCGISDGAIDVVATDHCTFSMAQRLQISKGDFSRCPNGLPGVENRMQLLFSSGVMTGRITPERFVELTSAMPARLFGLWPQKGLLAPGSDGDVVIIDPRQSQQIQHRHLHDNADYSPWEGFTCQGAIVRTLSRGETIFCDGTFTGKAGRGRFLRRKPFVPPVL.

The a divalent metal cation site is built by histidine 59, histidine 61, and lysine 151. Lysine 151 carries the post-translational modification N6-carboxylysine. Substrate is bound at residue tyrosine 156. A divalent metal cation-binding residues include histidine 182 and histidine 239. Serine 286 provides a ligand contact to substrate. Aspartate 313 contributes to the a divalent metal cation binding site. A substrate-binding site is contributed by asparagine 335.

It belongs to the metallo-dependent hydrolases superfamily. Hydantoinase/dihydropyrimidinase family. As to quaternary structure, homotetramer. The cofactor is a divalent metal cation. In terms of processing, carboxylation allows a single lysine to coordinate two divalent metal cations.

The catalysed reaction is D-5-phenylhydantoin + H2O = N-carbamoyl-D-phenylglycine + H(+). Catalyzes the stereospecific hydrolysis of the cyclic amide bond of D-hydantoin derivatives with an aromatic side chains at the 5'-position. Has no activity on dihydropyrimidines. The physiological function is unknown. The chain is D-phenylhydantoinase from Shigella boydii serotype 4 (strain Sb227).